A 300-amino-acid chain; its full sequence is Phospholipase A1 (300 aa).

Cysteines 4 and 87 form a disulfide. Ser-137 acts as the Nucleophile in catalysis. Residue Asp-165 is the Charge relay system of the active site. Intrachain disulfides connect Cys-176–Cys-181 and Cys-219–Cys-227. His-229 functions as the Charge relay system in the catalytic mechanism. 3 cysteine pairs are disulfide-bonded: Cys-244–Cys-268, Cys-245–Cys-293, and Cys-261–Cys-266.

This sequence belongs to the AB hydrolase superfamily. Lipase family. As to expression, expressed by the venom gland.

The protein resides in the secreted. The enzyme catalyses a 1,2-diacyl-sn-glycero-3-phosphocholine + H2O = a 2-acyl-sn-glycero-3-phosphocholine + a fatty acid + H(+). Functionally, catalyzes the hydrolysis of phosphatidylcholine with phospholipase A1 activity. May act as an allergen and induce hemolytic activity. This chain is Phospholipase A1, found in Vespula maculifrons (Eastern yellow jacket).